The primary structure comprises 318 residues: Transaldolase (318 aa).

The Schiff-base intermediate with substrate role is filled by K132.

Belongs to the transaldolase family. Type 1 subfamily. In terms of assembly, homodimer.

It localises to the cytoplasm. It catalyses the reaction D-sedoheptulose 7-phosphate + D-glyceraldehyde 3-phosphate = D-erythrose 4-phosphate + beta-D-fructose 6-phosphate. It participates in carbohydrate degradation; pentose phosphate pathway; D-glyceraldehyde 3-phosphate and beta-D-fructose 6-phosphate from D-ribose 5-phosphate and D-xylulose 5-phosphate (non-oxidative stage): step 2/3. Functionally, transaldolase is important for the balance of metabolites in the pentose-phosphate pathway. This is Transaldolase from Shewanella baltica (strain OS223).